The primary structure comprises 87 residues: Small ribosomal subunit protein eS21 (87 aa).

M1 carries the post-translational modification N-acetylmethionine.

This sequence belongs to the eukaryotic ribosomal protein eS21 family. As to quaternary structure, component of the small ribosomal subunit (SSU). Mature yeast ribosomes consist of a small (40S) and a large (60S) subunit. The 40S small subunit contains 1 molecule of ribosomal RNA (18S rRNA) and at least 33 different proteins. The large 60S subunit contains 3 rRNA molecules (25S, 5.8S and 5S rRNA) and at least 46 different proteins. Interacts with uS2A and uS2B, strongest interaction is with uS2B.

It is found in the cytoplasm. It localises to the nucleus. Functionally, component of the ribosome, a large ribonucleoprotein complex responsible for the synthesis of proteins in the cell. The small ribosomal subunit (SSU) binds messenger RNAs (mRNAs) and translates the encoded message by selecting cognate aminoacyl-transfer RNA (tRNA) molecules. The large subunit (LSU) contains the ribosomal catalytic site termed the peptidyl transferase center (PTC), which catalyzes the formation of peptide bonds, thereby polymerizing the amino acids delivered by tRNAs into a polypeptide chain. The nascent polypeptides leave the ribosome through a tunnel in the LSU and interact with protein factors that function in enzymatic processing, targeting, and the membrane insertion of nascent chains at the exit of the ribosomal tunnel. eS21 is required for the processing of the 20S rRNA-precursor to mature 18S rRNA in a late step of the maturation of 40S ribosomal subunits. Has a physiological role leading to 18S rRNA stability. This Schizosaccharomyces pombe (strain 972 / ATCC 24843) (Fission yeast) protein is Small ribosomal subunit protein eS21 (rps21).